The sequence spans 71 residues: Small ribosomal subunit protein bS21 (71 aa).

Positions 48 to 59 (EKASLAKRHAKR) are enriched in basic residues. A disordered region spans residues 48 to 71 (EKASLAKRHAKRNFRENARNTRLY). Residues 60 to 71 (NFRENARNTRLY) show a composition bias toward basic and acidic residues.

It belongs to the bacterial ribosomal protein bS21 family.

The protein is Small ribosomal subunit protein bS21 of Glaesserella parasuis serovar 5 (strain SH0165) (Haemophilus parasuis).